The primary structure comprises 1693 residues: 1-phosphatidylinositol 4,5-bisphosphate phosphodiesterase eta-1 (1693 aa).

Residues 20–128 (SVMQSGTQMI…WITGLKYLMA (109 aa)) form the PH domain. EF-hand domains lie at 142–177 (THDQ…LNVN), 178–214 (LPRR…MSLR), and 226–246 (DKKD…EQKM). Residues aspartate 155, asparagine 157, aspartate 159, and glutamate 166 each coordinate Ca(2+). The PI-PLC X-box domain maps to 299–444 (QDMDQPLCNY…LKGKILVKGK (146 aa)). Histidine 314 is a catalytic residue. Ca(2+) contacts are provided by asparagine 315, glutamate 344, and aspartate 346. Histidine 358 is an active-site residue. A Ca(2+)-binding site is contributed by glutamate 393. Substrate-binding residues include lysine 442 and lysine 444. A disordered region spans residues 526–585 (LNAHLKQSPDVKESGKKSHGRSLMTNFGKHKKTTKSRSKSYSTDDEEDTQQSTGKEGGQL). Basic and acidic residues predominate over residues 532–541 (QSPDVKESGK). Basic residues predominate over residues 553-563 (GKHKKTTKSRS). One can recognise a PI-PLC Y-box domain in the interval 601-714 (LSDLVVYTNS…GYVLKPQQMC (114 aa)). Substrate-binding residues include serine 627 and arginine 654. The region spanning 715–843 (KGTFNPFSGD…PGYRHVYLEG (129 aa)) is the C2 domain. 6 residues coordinate Ca(2+): isoleucine 758, aspartate 760, aspartate 784, aspartate 813, histidine 814, and aspartate 815. A compositionally biased stretch (basic and acidic residues) spans 992–1005 (IEGKENSLAEDKDG). Disordered stretches follow at residues 992–1014 (IEGK…ASIK), 1052–1089 (TGEQ…PKQH), 1300–1329 (LESN…ETLK), and 1578–1613 (LSSR…GAGV). Positions 1065 to 1086 (RTTSNATSNCQENPCPSKSLSP) are enriched in polar residues. Basic and acidic residues predominate over residues 1592–1601 (RAKEKQEANK).

The cofactor is Ca(2+). Expressed in brain and to a lower extent in lung. In brain, it is found in cerebrum, cerebellum and spinal cord. In embryo expressed in the notochord, developing spinal cord (in a ventral to dorsal gradient), dorsal root ganglia, cerebellum and dermatomyosome.

It localises to the cytoplasm. It is found in the membrane. It catalyses the reaction a 1,2-diacyl-sn-glycero-3-phospho-(1D-myo-inositol-4,5-bisphosphate) + H2O = 1D-myo-inositol 1,4,5-trisphosphate + a 1,2-diacyl-sn-glycerol + H(+). Its function is as follows. The production of the second messenger molecules diacylglycerol (DAG) and inositol 1,4,5-trisphosphate (IP3) is mediated by calcium-activated phosphatidylinositol-specific phospholipase C enzymes. This is 1-phosphatidylinositol 4,5-bisphosphate phosphodiesterase eta-1 from Homo sapiens (Human).